A 138-amino-acid chain; its full sequence is Large ribosomal subunit protein uL16 (138 aa).

Over residues methionine 1–glycine 15 the composition is skewed to basic residues. Positions methionine 1–glutamate 20 are disordered.

It belongs to the universal ribosomal protein uL16 family. Part of the 50S ribosomal subunit.

Binds 23S rRNA and is also seen to make contacts with the A and possibly P site tRNAs. This is Large ribosomal subunit protein uL16 from Borrelia turicatae (strain 91E135).